The primary structure comprises 209 residues: Outer-membrane lipoprotein carrier protein (209 aa).

An N-terminal signal peptide occupies residues 1-21 (MHRQLRYAVLATALFASTAFA).

This sequence belongs to the LolA family. Monomer.

The protein resides in the periplasm. Its function is as follows. Participates in the translocation of lipoproteins from the inner membrane to the outer membrane. Only forms a complex with a lipoprotein if the residue after the N-terminal Cys is not an aspartate (The Asp acts as a targeting signal to indicate that the lipoprotein should stay in the inner membrane). This is Outer-membrane lipoprotein carrier protein from Xanthomonas campestris pv. campestris (strain 8004).